Reading from the N-terminus, the 149-residue chain is Inner membrane protein YidI (149 aa).

Over 1 to 8 the chain is Cytoplasmic; it reads MGIIAQNK. A helical transmembrane segment spans residues 9–31; sequence ISSLGMLFGAIALMMGIIHFSFG. At 32 to 77 the chain is on the periplasmic side; it reads PFSAPPPTFESIVADKTAEIKRGLLAGIKGEKITTVEKKEDVDVDK. A helical membrane pass occupies residues 78-97; sequence ILNQSGIALAIAALLCAFIG. The Cytoplasmic segment spans residues 98 to 117; it reads GMRKENRWGIRGALVFGGGT. A helical membrane pass occupies residues 118 to 140; it reads LAFHTLLFGIGIVCSILLIFLIF. Topologically, residues 141 to 149 are periplasmic; the sequence is SFLTGGSLV.

The protein localises to the cell inner membrane. This is Inner membrane protein YidI (yidI) from Escherichia coli (strain K12).